The chain runs to 208 residues: Imidazole glycerol phosphate synthase subunit HisH (208 aa).

One can recognise a Glutamine amidotransferase type-1 domain in the interval 1–206 (MIVIIDYDTG…KEVIRSCKSS (206 aa)). C79 serves as the catalytic Nucleophile. Active-site residues include H181 and E183.

As to quaternary structure, heterodimer of HisH and HisF.

Its subcellular location is the cytoplasm. The catalysed reaction is 5-[(5-phospho-1-deoxy-D-ribulos-1-ylimino)methylamino]-1-(5-phospho-beta-D-ribosyl)imidazole-4-carboxamide + L-glutamine = D-erythro-1-(imidazol-4-yl)glycerol 3-phosphate + 5-amino-1-(5-phospho-beta-D-ribosyl)imidazole-4-carboxamide + L-glutamate + H(+). The enzyme catalyses L-glutamine + H2O = L-glutamate + NH4(+). It functions in the pathway amino-acid biosynthesis; L-histidine biosynthesis; L-histidine from 5-phospho-alpha-D-ribose 1-diphosphate: step 5/9. IGPS catalyzes the conversion of PRFAR and glutamine to IGP, AICAR and glutamate. The HisH subunit catalyzes the hydrolysis of glutamine to glutamate and ammonia as part of the synthesis of IGP and AICAR. The resulting ammonia molecule is channeled to the active site of HisF. The protein is Imidazole glycerol phosphate synthase subunit HisH of Listeria welshimeri serovar 6b (strain ATCC 35897 / DSM 20650 / CCUG 15529 / CIP 8149 / NCTC 11857 / SLCC 5334 / V8).